The sequence spans 815 residues: uncharacterized protein (815 aa).

A signal peptide spans 1-21 (MNIYRLSFVSCLVMAMPCAMA). C795 and C814 form a disulfide bridge.

It belongs to the fimbrial export usher family.

The protein localises to the cell outer membrane. Its function is as follows. Could be involved in the export and assembly of the putative YbgD fimbrial subunit across the outer membrane. This is an uncharacterized protein from Escherichia coli (strain K12).